The following is a 322-amino-acid chain: Structural glycoprotein p40 (322 aa).

Asparagine 130, asparagine 283, and asparagine 290 each carry an N-linked (GlcNAc...) asparagine; by host glycan.

It belongs to the baculoviridae gp41 family.

The protein localises to the virion. This Heliothis zea nuclear polyhedrosis virus (HzSNPV) protein is Structural glycoprotein p40 (P40).